The sequence spans 112 residues: Iron-sulfur cluster assembly protein CyaY (112 aa).

This sequence belongs to the frataxin family.

Its function is as follows. Involved in iron-sulfur (Fe-S) cluster assembly. May act as a regulator of Fe-S biogenesis. This Herminiimonas arsenicoxydans protein is Iron-sulfur cluster assembly protein CyaY.